Reading from the N-terminus, the 251-residue chain is Myozenin-3 (251 aa).

Ser31 carries the post-translational modification Phosphoserine. The interval 50-67 is binding to ACTN2, PPP3CA and TCAP; the sequence is LLFQKRQRRVQKFTFELA. The interval 67-110 is binding to FLNC; that stretch reads AASQRAMLAGSARRKVTGTAESGTVANANGPEGPNYRSELHIFP. A disordered region spans residues 79-102; sequence RRKVTGTAESGTVANANGPEGPNY. The binding to ACTN2 stretch occupies residues 186-207; it reads PSPNDYRNFNKTPVPFGGPLVG.

Belongs to the myozenin family. As to quaternary structure, interacts with ACTN2, LDB3, FLNC, PPP3CA and TCAP. As to expression, expressed specifically in skeletal muscle. Not detected in heart.

The protein resides in the cytoplasm. Its subcellular location is the myofibril. The protein localises to the sarcomere. It localises to the z line. In terms of biological role, myozenins may serve as intracellular binding proteins involved in linking Z line proteins such as alpha-actinin, gamma-filamin, TCAP/telethonin, LDB3/ZASP and localizing calcineurin signaling to the sarcomere. Plays an important role in the modulation of calcineurin signaling. May play a role in myofibrillogenesis. The chain is Myozenin-3 from Homo sapiens (Human).